The chain runs to 462 residues: Cysteine--tRNA ligase (462 aa).

Cys-24 contacts Zn(2+). The 'HIGH' region signature appears at 26–36 (PTVYDDAHLGH). The Zn(2+) site is built by Cys-199, His-224, and Glu-228. The 'KMSKS' region signature appears at 256 to 260 (KMSKS). Lys-259 contacts ATP.

It belongs to the class-I aminoacyl-tRNA synthetase family. As to quaternary structure, monomer. The cofactor is Zn(2+).

Its subcellular location is the cytoplasm. It catalyses the reaction tRNA(Cys) + L-cysteine + ATP = L-cysteinyl-tRNA(Cys) + AMP + diphosphate. In Campylobacter jejuni subsp. jejuni serotype O:2 (strain ATCC 700819 / NCTC 11168), this protein is Cysteine--tRNA ligase (cysS).